A 70-amino-acid chain; its full sequence is Small integral membrane protein 42 (70 aa).

Residues 26–46 (LVNVLFFFTPLMTLVTLLILV) traverse the membrane as a helical segment.

It is found in the membrane. The protein is Small integral membrane protein 42 of Homo sapiens (Human).